A 468-amino-acid polypeptide reads, in one-letter code: UDP-N-acetylmuramoyl-L-alanine--L-glutamate ligase (468 aa).

Position 122-128 (glycine 122–threonine 128) interacts with ATP.

The protein belongs to the MurCDEF family. MurD2 subfamily.

The protein localises to the cytoplasm. The enzyme catalyses UDP-N-acetyl-alpha-D-muramoyl-L-alanine + L-glutamate + ATP = UDP-N-acetyl-alpha-D-muramoyl-L-alanyl-L-glutamate + ADP + phosphate + H(+). The protein operates within cell wall biogenesis; peptidoglycan biosynthesis. Cell wall formation. Catalyzes the addition of L-glutamate to the nucleotide precursor UDP-N-acetylmuramoyl-L-alanine. Has weak activity with D-glutamate. The protein is UDP-N-acetylmuramoyl-L-alanine--L-glutamate ligase of Xanthomonas oryzae pv. oryzae (strain MAFF 311018).